The following is a 563-amino-acid chain: Bifunctional dihydrofolate reductase-thymidylate synthase (563 aa).

The DHFR domain occupies 3–195 (KFNIIAAINN…ILLRFQEYSV (193 aa)). Residue 117-124 (GGGVIYDL) coordinates NADP(+). Positions 275-563 (YIELVKTIME…CPSISAEMIA (289 aa)) are thymidylate synthase. Arginine 292 contributes to the dUMP binding site. Cysteine 435 is a catalytic residue. Residues histidine 436, 464–468 (QRSWD), asparagine 474, and 504–506 (HIY) each bind dUMP.

The protein in the N-terminal section; belongs to the dihydrofolate reductase family. In the C-terminal section; belongs to the thymidylate synthase family.

The enzyme catalyses (6S)-5,6,7,8-tetrahydrofolate + NADP(+) = 7,8-dihydrofolate + NADPH + H(+). It carries out the reaction dUMP + (6R)-5,10-methylene-5,6,7,8-tetrahydrofolate = 7,8-dihydrofolate + dTMP. It functions in the pathway cofactor biosynthesis; tetrahydrofolate biosynthesis; 5,6,7,8-tetrahydrofolate from 7,8-dihydrofolate: step 1/1. In terms of biological role, bifunctional enzyme. Involved in de novo dTMP biosynthesis. Key enzyme in folate metabolism. Catalyzes an essential reaction for de novo glycine and purine synthesis, DNA precursor synthesis, and for the conversion of dUMP to dTMP. This Acanthamoeba polyphaga mimivirus (APMV) protein is Bifunctional dihydrofolate reductase-thymidylate synthase.